Reading from the N-terminus, the 216-residue chain is Octanoyltransferase (216 aa).

Positions 35-213 (NSNPDFIWIG…IIQEEFNFDF (179 aa)) constitute a BPL/LPL catalytic domain. Substrate contacts are provided by residues 77-84 (RGGEVTCH), 144-146 (SIG), and 157-159 (GFS). Catalysis depends on Cys175, which acts as the Acyl-thioester intermediate.

Belongs to the LipB family.

It is found in the cytoplasm. It catalyses the reaction octanoyl-[ACP] + L-lysyl-[protein] = N(6)-octanoyl-L-lysyl-[protein] + holo-[ACP] + H(+). The protein operates within protein modification; protein lipoylation via endogenous pathway; protein N(6)-(lipoyl)lysine from octanoyl-[acyl-carrier-protein]: step 1/2. In terms of biological role, catalyzes the transfer of endogenously produced octanoic acid from octanoyl-acyl-carrier-protein onto the lipoyl domains of lipoate-dependent enzymes. Lipoyl-ACP can also act as a substrate although octanoyl-ACP is likely to be the physiological substrate. This is Octanoyltransferase from Prochlorococcus marinus (strain MIT 9312).